The sequence spans 85 residues: Large ribosomal subunit protein bL27 (85 aa).

Residues 1–21 (MAHKKAGGSSRNGRDSEAKRL) are disordered.

Belongs to the bacterial ribosomal protein bL27 family.

This is Large ribosomal subunit protein bL27 from Aeromonas hydrophila subsp. hydrophila (strain ATCC 7966 / DSM 30187 / BCRC 13018 / CCUG 14551 / JCM 1027 / KCTC 2358 / NCIMB 9240 / NCTC 8049).